The primary structure comprises 261 residues: Methyltransferase nsrG (261 aa).

The interval 49 to 141 is methyltransferase domain; sequence DVGAGNGPYA…AHQLRPGALF (93 aa).

Belongs to the methyltransferase superfamily.

It functions in the pathway secondary metabolite biosynthesis. Functionally, methyltransferase; part of the gene cluster that mediates the biosynthesis of the tetrahydroxanthone dimer neosartorin, which exhibits antibacterial activity. The two different monomeric units appear to be synthesized by the same set of enzymes, among which the Baeyer-Villiger monooxygenase nsrF is the key enzyme for the divergence of the biosynthetic routes. The pathway begins with the synthesis of atrochrysone thioester by the polyketide synthase nsrB. The atrochrysone carboxyl ACP thioesterase nsrC then breaks the thioester bond and releases the atrochrysone carboxylic acid from AacuL. Atrochrysone carboxylic acid is decarboxylated by the decarboxylase nsrE, and oxidized by the anthrone oxygenase nsrD to yield emodin. Emodin is then reduced to emodin hydroquinone by the oxidoreductase nsrR. A-ring reduction by the short chain dehydrogenase nsrJ, dehydration by the scytalone dehydratase-like protein nsrI and probable spontaneous re-oxidation, results in overall deoxygenation to chrysophanol. The Baeyer-Villiger monooxygenase nsrF accepts chrysophanol as a substrate to insert one oxygen atom at two different positions to yield the precursors of both monomric units. NsrF is promiscuous/flexible in interacting with the 2 (non methylated and methylated) aromatic rings of chrysophanol, thus diverging the biosynthetic pathway at this point. After the hydrolysis of the lactones, methylesterification by the methyltransferase nsrG yields respectively moniliphenone and 2,2',6'-trihydroxy-4-methyl-6-methoxya-cyldiphenylmethanone. The next steps are the hydroxylation by the FAD-dependent monooxygenase nsrK, followed by isomerization by the monooxygenase nsrQ. The short chain dehydrogenase/reductase nsrO then catalyzes the C-5 ketoreduction to give the xanthone skeleton of blennolide C and 5-acetylblennolide A. The acetyltransferase nsrL has a strict substrate specificity and uses only blennolide A but not blennolide C to yield 5-acetylblennolide A as the single-acetylated product. In the final step of the biosynthesis, the heterodimerization of the 2 xanthones, blennolide C and 5-acetylblennolide A, is catalyzed by the cytochrome P450 monooxygenase nsrP. NsrP can utilize at least three different xanthones as its substrates to perform the dimerization reaction. The polypeptide is Methyltransferase nsrG (Aspergillus novofumigatus (strain IBT 16806)).